Here is a 526-residue protein sequence, read N- to C-terminus: Cholesterol side-chain cleavage enzyme, mitochondrial (526 aa).

The N-terminal 36 residues, 1–36 (MLAKGLCLRSVLVKSCQPFLSPVWQGPGLATGNGAG), are a transit peptide targeting the mitochondrion. A heme-binding site is contributed by Cys459.

It belongs to the cytochrome P450 family. As to quaternary structure, interacts with FDX1/adrenodoxin. The cofactor is heme. In terms of tissue distribution, expressed in the kidney where it localizes to the distal convoluted tubule and the thick ascending limb of the loop of Henle (at protein level). In the ovary, highly expressed in interstitial cells (at protein level). Also expressed in adrenal gland and testis.

The protein localises to the mitochondrion inner membrane. The catalysed reaction is 6 reduced [adrenodoxin] + cholesterol + 3 O2 + 6 H(+) = 4-methylpentanal + pregnenolone + 6 oxidized [adrenodoxin] + 4 H2O. It carries out the reaction 2 reduced [adrenodoxin] + cholesterol + O2 + 2 H(+) = (22R)-hydroxycholesterol + 2 oxidized [adrenodoxin] + H2O. It catalyses the reaction (22R)-hydroxycholesterol + 2 reduced [adrenodoxin] + O2 + 2 H(+) = (20R,22R)-20,22-dihydroxycholesterol + 2 oxidized [adrenodoxin] + H2O. The enzyme catalyses (20R,22R)-20,22-dihydroxycholesterol + 2 reduced [adrenodoxin] + O2 + 2 H(+) = 4-methylpentanal + pregnenolone + 2 oxidized [adrenodoxin] + 2 H2O. Its pathway is lipid metabolism; C21-steroid hormone metabolism. The protein operates within steroid metabolism; cholesterol metabolism. A cytochrome P450 monooxygenase that catalyzes the side-chain hydroxylation and cleavage of cholesterol to pregnenolone, the precursor of most steroid hormones. Catalyzes three sequential oxidation reactions of cholesterol, namely the hydroxylation at C22 followed with the hydroxylation at C20 to yield 20R,22R-hydroxycholesterol that is further cleaved between C20 and C22 to yield the C21-steroid pregnenolone and 4-methylpentanal. Mechanistically, uses molecular oxygen inserting one oxygen atom into a substrate and reducing the second into a water molecule. Two electrons are provided by NADPH via a two-protein mitochondrial transfer system comprising flavoprotein FDXR (adrenodoxin/ferredoxin reductase) and nonheme iron-sulfur protein FDX1 or FDX2 (adrenodoxin/ferredoxin). This is Cholesterol side-chain cleavage enzyme, mitochondrial from Rattus norvegicus (Rat).